The chain runs to 823 residues: Ankyrin repeat domain-containing protein 20B (823 aa).

ANK repeat units lie at residues 32–65, 66–95, 99–128, 132–161, 165–194, and 198–227; these read SELQKIHRAAVKGDAAEVERCLARRSGDLDARDK, QHRTALHLACASGHVQVVTLLVNRKCQIDI, ENRTPLIQAVHCQEEACAVILLKHGANPNL, YGNTALHYAVYSESTSLAEKLLSHGAHIEA, DSNTPLLFAIICKKEKMVEFLLKKKASTHA, and LRRSALMLAVYYDSPGIVSILLKQNIDVFA. Disordered regions lie at residues 302 to 343 and 355 to 401; these read PEKV…GVED and VQTL…QLSE. Residues 372 to 382 show a composition bias toward basic and acidic residues; that stretch reads QERHERSEKKQ. Coiled-coil stretches lie at residues 431 to 480, 565 to 724, and 776 to 805; these read KKLK…KQLE, EMIT…NNST, and LVLEEKSKKLMNECDHLKESLFQYEREKAE.

The polypeptide is Ankyrin repeat domain-containing protein 20B (ANKRD20A8P) (Homo sapiens (Human)).